The primary structure comprises 180 residues: Large ribosomal subunit protein uL5 (180 aa).

It belongs to the universal ribosomal protein uL5 family. In terms of assembly, part of the 50S ribosomal subunit; part of the 5S rRNA/L5/L18/L25 subcomplex. Contacts the 5S rRNA and the P site tRNA. Forms a bridge to the 30S subunit in the 70S ribosome.

Its function is as follows. This is one of the proteins that bind and probably mediate the attachment of the 5S RNA into the large ribosomal subunit, where it forms part of the central protuberance. In the 70S ribosome it contacts protein S13 of the 30S subunit (bridge B1b), connecting the 2 subunits; this bridge is implicated in subunit movement. Contacts the P site tRNA; the 5S rRNA and some of its associated proteins might help stabilize positioning of ribosome-bound tRNAs. The polypeptide is Large ribosomal subunit protein uL5 (Clostridium tetani (strain Massachusetts / E88)).